The sequence spans 303 residues: Glycine--tRNA ligase alpha subunit (303 aa).

This sequence belongs to the class-II aminoacyl-tRNA synthetase family. Tetramer of two alpha and two beta subunits.

It is found in the cytoplasm. It carries out the reaction tRNA(Gly) + glycine + ATP = glycyl-tRNA(Gly) + AMP + diphosphate. In Stenotrophomonas maltophilia (strain K279a), this protein is Glycine--tRNA ligase alpha subunit.